Here is a 329-residue protein sequence, read N- to C-terminus: 3-isopropylmalate dehydrogenase (329 aa).

Substrate-binding residues include Arg-83, Arg-93, Arg-114, and Asp-200. The Mg(2+) site is built by Asp-200, Asp-224, and Asp-228. Residue 257 to 269 (GSAPQIAGKNIAN) participates in NAD(+) binding.

The protein belongs to the isocitrate and isopropylmalate dehydrogenases family. In terms of assembly, homotetramer. Mg(2+) serves as cofactor. The cofactor is Mn(2+).

The protein resides in the cytoplasm. The enzyme catalyses (2R,3S)-3-isopropylmalate + NAD(+) = 4-methyl-2-oxopentanoate + CO2 + NADH. Its pathway is amino-acid biosynthesis; L-leucine biosynthesis; L-leucine from 3-methyl-2-oxobutanoate: step 3/4. Catalyzes the oxidation of 3-carboxy-2-hydroxy-4-methylpentanoate (3-isopropylmalate) to 3-carboxy-4-methyl-2-oxopentanoate. The product decarboxylates to 4-methyl-2 oxopentanoate. This Methanothermobacter thermautotrophicus (strain ATCC 29096 / DSM 1053 / JCM 10044 / NBRC 100330 / Delta H) (Methanobacterium thermoautotrophicum) protein is 3-isopropylmalate dehydrogenase (leuB).